Reading from the N-terminus, the 168-residue chain is MADQPSGNNDAKQAETNGNTVPASLNVLTQYIKDLSFESPGAPQSLRARDKAPSININVNVNANPLGGTDYDVLLTLTAKAEADNVVLFNVELIYGGVFRIQGFPQEHMLPLLFIECPRLLFPFARQIIADATRNGGFPPLMIDPIDFARMFQQRLAEEEARRKVQVS.

Residues 1 to 21 (MADQPSGNNDAKQAETNGNTV) form a disordered region.

This sequence belongs to the SecB family. In terms of assembly, homotetramer, a dimer of dimers. One homotetramer interacts with 1 SecA dimer.

It localises to the cytoplasm. One of the proteins required for the normal export of preproteins out of the cell cytoplasm. It is a molecular chaperone that binds to a subset of precursor proteins, maintaining them in a translocation-competent state. It also specifically binds to its receptor SecA. This chain is Protein-export protein SecB, found in Chelativorans sp. (strain BNC1).